A 325-amino-acid polypeptide reads, in one-letter code: Heat-inducible transcription repressor HrcA (325 aa).

It belongs to the HrcA family.

Its function is as follows. Negative regulator of class I heat shock genes (grpE-dnaK-dnaJ and groELS operons). Prevents heat-shock induction of these operons. This chain is Heat-inducible transcription repressor HrcA, found in Staphylococcus epidermidis (strain ATCC 35984 / DSM 28319 / BCRC 17069 / CCUG 31568 / BM 3577 / RP62A).